The chain runs to 272 residues: 2,3,4,5-tetrahydropyridine-2,6-dicarboxylate N-succinyltransferase (272 aa).

Residues Arg-104 and Asp-141 each contribute to the substrate site.

The protein belongs to the transferase hexapeptide repeat family. Homotrimer.

The protein resides in the cytoplasm. It catalyses the reaction (S)-2,3,4,5-tetrahydrodipicolinate + succinyl-CoA + H2O = (S)-2-succinylamino-6-oxoheptanedioate + CoA. The protein operates within amino-acid biosynthesis; L-lysine biosynthesis via DAP pathway; LL-2,6-diaminopimelate from (S)-tetrahydrodipicolinate (succinylase route): step 1/3. In Alkalilimnicola ehrlichii (strain ATCC BAA-1101 / DSM 17681 / MLHE-1), this protein is 2,3,4,5-tetrahydropyridine-2,6-dicarboxylate N-succinyltransferase.